An 856-amino-acid chain; its full sequence is Leucine--tRNA ligase (856 aa).

A 'HIGH' region motif is present at residues Pro-53 to His-63. The short motif at Lys-622 to Ser-626 is the 'KMSKS' region element. Lys-625 is a binding site for ATP.

It belongs to the class-I aminoacyl-tRNA synthetase family.

It is found in the cytoplasm. The enzyme catalyses tRNA(Leu) + L-leucine + ATP = L-leucyl-tRNA(Leu) + AMP + diphosphate. This is Leucine--tRNA ligase from Prochlorococcus marinus (strain AS9601).